The following is a 142-amino-acid chain: Large ribosomal subunit protein uL11 (142 aa).

The protein belongs to the universal ribosomal protein uL11 family. Part of the ribosomal stalk of the 50S ribosomal subunit. Interacts with L10 and the large rRNA to form the base of the stalk. L10 forms an elongated spine to which L12 dimers bind in a sequential fashion forming a multimeric L10(L12)X complex. One or more lysine residues are methylated.

In terms of biological role, forms part of the ribosomal stalk which helps the ribosome interact with GTP-bound translation factors. The protein is Large ribosomal subunit protein uL11 of Desulforudis audaxviator (strain MP104C).